Consider the following 130-residue polypeptide: uncharacterized protein (130 aa).

The first 20 residues, 1-20, serve as a signal peptide directing secretion; sequence MFNCLTKLVILVCLKYVAKA.

This is an uncharacterized protein from Saccharomyces cerevisiae (strain ATCC 204508 / S288c) (Baker's yeast).